A 221-amino-acid polypeptide reads, in one-letter code: Lectin L6 (221 aa).

Repeat copies occupy residues 1–38 (VQWH…PCYD), 39–75 (GQWT…VDGS), 76–113 (GSWV…KPCN), 114–150 (GAWT…VDGS), 151–188 (GSWQ…KPCS), and 189–221 (GQWS…YRSG). The interval 1-221 (VQWHQIPGKL…NSVDNIYRSG (221 aa)) is 6 X approximate tandem repeats. Cys-32 and Cys-36 form a disulfide bridge. A disulfide bridge links Cys-108 with Cys-112. A disulfide bond links Cys-183 and Cys-187.

It belongs to the tectonin family. Hemocytes.

It is found in the cytoplasmic vesicle. Its subcellular location is the secretory vesicle. In terms of biological role, lipopolysaccharide-binding protein with Gram-negative antibacterial activity. Binds zinc and calcium. The polypeptide is Lectin L6 (Tachypleus tridentatus (Japanese horseshoe crab)).